The following is a 72-amino-acid chain: Translation initiation factor IF-1 (72 aa).

In terms of domain architecture, S1-like spans 1–72 (MAKEEVLEFP…TKGRITYRFK (72 aa)).

The protein belongs to the IF-1 family. Component of the 30S ribosomal translation pre-initiation complex which assembles on the 30S ribosome in the order IF-2 and IF-3, IF-1 and N-formylmethionyl-tRNA(fMet); mRNA recruitment can occur at any time during PIC assembly.

The protein localises to the cytoplasm. Functionally, one of the essential components for the initiation of protein synthesis. Stabilizes the binding of IF-2 and IF-3 on the 30S subunit to which N-formylmethionyl-tRNA(fMet) subsequently binds. Helps modulate mRNA selection, yielding the 30S pre-initiation complex (PIC). Upon addition of the 50S ribosomal subunit IF-1, IF-2 and IF-3 are released leaving the mature 70S translation initiation complex. In Sinorhizobium medicae (strain WSM419) (Ensifer medicae), this protein is Translation initiation factor IF-1.